Reading from the N-terminus, the 223-residue chain is GTP-binding nuclear protein Ran (223 aa).

The region spanning 8-172 (VVAEFKLVLV…LWILRKLTGD (165 aa)) is the Small GTPase Ran-type domain. 19–26 (DGGVGKTT) serves as a coordination point for GTP. The segment at 38 to 46 (KRYIATQGV) is switch-I. GTP is bound by residues glycine 69, 123-126 (NKVD), and 151-153 (SAK). The interval 69–85 (GQEKLGGLREGYYIGAD) is switch-II.

Belongs to the small GTPase superfamily. Ran family. Monomer. Found in a nuclear export complex with RanGTP, exportin and pre-miRNA.

The protein resides in the nucleus. Its function is as follows. GTP-binding protein involved in nucleocytoplasmic transport. Required for the import of protein into the nucleus and also for RNA export. Involved in chromatin condensation and control of cell cycle. The chain is GTP-binding nuclear protein Ran from Tetrahymena pyriformis.